A 194-amino-acid chain; its full sequence is Imidazoleglycerol-phosphate dehydratase (194 aa).

This sequence belongs to the imidazoleglycerol-phosphate dehydratase family.

It is found in the cytoplasm. The enzyme catalyses D-erythro-1-(imidazol-4-yl)glycerol 3-phosphate = 3-(imidazol-4-yl)-2-oxopropyl phosphate + H2O. The protein operates within amino-acid biosynthesis; L-histidine biosynthesis; L-histidine from 5-phospho-alpha-D-ribose 1-diphosphate: step 6/9. The chain is Imidazoleglycerol-phosphate dehydratase from Rubrobacter xylanophilus (strain DSM 9941 / JCM 11954 / NBRC 16129 / PRD-1).